We begin with the raw amino-acid sequence, 620 residues long: MRNSLLFFIFLPSTILAVDLIHLHDGSPLFGEEVLSQTGKPLTRFQGIPFAEPPVGNLRFKKPKPKQPWRIPLNATTPPNSCIQSEDTYFGDFYGSTMWNANTKLSEDCLYLNVYVPGKVDPNKKLAVMVWVYGGGFWSGTATLDVYDGRILTVEENVILVAMNYRVSIFGFLYMNRPEAPGNMGMWDQLLAMKWVHKNIDLFGGDLSRITLFGESAGAASVSIHMLSPKSAPYFHRAIIQSGSATSPWAIEPRDVALARAVILYNAMKCGNMSLINPDYDRILDCFQRADADALRENEWAPVREFGDFPWVPVVDGDFLLENAQTSLKQGNFKKTQLLAGSNRDESIYFLTYQLPDIFPVADFFTKTDFIKDRQLWIKGVKDLLPRQILKCQLTLAAVLHEYEPQDLPVTPRDWINAMDKMLGDYHFTCSVNEMALAHTKHGGDTYYYYFTHRASQQTWPEWMGVLHGYEINFIFGEPLNQKRFNYTDEERELSNRFMRYWANFAKTGDPNKNEDGSFTQDVWPKYNSVSMEYMNMTVESSYPSMKRIGHGPRRKECAFWKAYLPNLMAAVADVGDPYLVWKQQMDKWQNEYITDWQYHFEQYKRYQTYRQSDSETCGG.

The first 31 residues, 1–31 (MRNSLLFFIFLPSTILAVDLIHLHDGSPLFG), serve as a signal peptide directing secretion. Asn-74 is a glycosylation site (N-linked (GlcNAc...) asparagine). Cys-82 and Cys-109 are oxidised to a cystine. Ser-216 acts as the Acyl-ester intermediate in catalysis. The cysteines at positions 270 and 286 are disulfide-linked. N-linked (GlcNAc...) asparagine glycosylation is present at Asn-272. Residues Glu-346 and His-468 each act as charge relay system in the active site. Cys-430 and Cys-558 are joined by a disulfide. 2 N-linked (GlcNAc...) asparagine glycosylation sites follow: Asn-486 and Asn-536.

The protein belongs to the type-B carboxylesterase/lipase family. As to quaternary structure, oligomer composed of disulfide-linked homodimers.

The protein localises to the synapse. It is found in the secreted. It localises to the cell membrane. It catalyses the reaction acetylcholine + H2O = choline + acetate + H(+). Its function is as follows. Rapidly hydrolyzes acetylcholine and releases choline into the synapse. It can hydrolyze propionylcholine and butyrylthiocholine in vitro. In Caenorhabditis elegans, this protein is Acetylcholinesterase 1 (ace-1).